The primary structure comprises 414 residues: Probable sugar-binding periplasmic protein (414 aa).

The N-terminal stretch at 1–22 (MRKFMTTTAVAALMLAATAARA) is a signal peptide.

The protein belongs to the bacterial solute-binding protein 1 family.

Its subcellular location is the periplasm. In terms of biological role, part of a binding-protein-dependent transport system for a sugar. The protein is Probable sugar-binding periplasmic protein of Rhizobium meliloti (strain 1021) (Ensifer meliloti).